The sequence spans 370 residues: D-aspartate oxidase (370 aa).

8 residues coordinate FAD: I15, A49, S50, G54, V166, R317, G346, and Q348. Positions 368–370 (ARL) match the Microbody targeting signal motif.

Belongs to the DAMOX/DASOX family. In terms of assembly, homotetramer. FAD is required as a cofactor.

The protein localises to the peroxisome matrix. The enzyme catalyses D-aspartate + O2 + H2O = oxaloacetate + H2O2 + NH4(+). It carries out the reaction D-glutamate + O2 + H2O = H2O2 + 2-oxoglutarate + NH4(+). With respect to regulation, inhibited by malonate and D-malate. Very mildly inhibited by benzoate, ethylenediaminetetraacetic acid (EDTA), crotonate and anthranilate. May be very mildly inhibited by meso-tartrate. Its function is as follows. Selectively catalyzes the oxidative deamination of acidic amino acids. Protects the organism from the toxicity of D-amino acids. Enables the organism to utilize D-amino acids as a source of nutrients. Enables the organism to utilize D-aspartate as a source of nitrogen and carbon. The sequence is that of D-aspartate oxidase from Vanrija humicola (Yeast).